The following is a 716-amino-acid chain: uncharacterized protein (716 aa).

Disordered regions lie at residues 84–103 (SPSI…ERYP) and 153–189 (VTDE…SQGQ). Ser-97 is modified (phosphoserine). Glycyl lysine isopeptide (Lys-Gly) (interchain with G-Cter in SUMO2) cross-links involve residues Lys-201, Lys-204, Lys-237, Lys-283, and Lys-626.

This is an uncharacterized protein from Mus musculus (Mouse).